We begin with the raw amino-acid sequence, 344 residues long: S-adenosylmethionine:tRNA ribosyltransferase-isomerase (344 aa).

This sequence belongs to the QueA family. As to quaternary structure, monomer.

The protein localises to the cytoplasm. The catalysed reaction is 7-aminomethyl-7-carbaguanosine(34) in tRNA + S-adenosyl-L-methionine = epoxyqueuosine(34) in tRNA + adenine + L-methionine + 2 H(+). It functions in the pathway tRNA modification; tRNA-queuosine biosynthesis. In terms of biological role, transfers and isomerizes the ribose moiety from AdoMet to the 7-aminomethyl group of 7-deazaguanine (preQ1-tRNA) to give epoxyqueuosine (oQ-tRNA). The chain is S-adenosylmethionine:tRNA ribosyltransferase-isomerase from Thiobacillus denitrificans (strain ATCC 25259 / T1).